A 300-amino-acid chain; its full sequence is MNRRTDADSWDPASSVGATATMVAASRARASRGPDALLDDRLAEPLVRAVGLQPLVRMIDGDTAVDDPPSSPRSLNEQIAVRTRYFDDFFTAAGAGGIRQAVILASGLDTRAYRLNWPSGMTVYEIDQPQVIEFKTRTLAEFGALPCPDHRPIGIDLREDWPSALRQRGFDAGQPTAWIAEGLLVYLPPEAQDRLFDNIAELSTPGSQVATEHFPDPNGFSGPRAQRLSERWRRMGLDLDMAELIYHGDRNTVIDYLADHGWRVRARTFEEMHAHNGFEPPDDEMMALFGGMSYVTGIRK.

S-adenosyl-L-methionine contacts are provided by residues Asp-127 and 156–157; that span reads DL.

It belongs to the UPF0677 family.

In terms of biological role, exhibits S-adenosyl-L-methionine-dependent methyltransferase activity. This chain is Putative S-adenosyl-L-methionine-dependent methyltransferase MMAR_1058, found in Mycobacterium marinum (strain ATCC BAA-535 / M).